Reading from the N-terminus, the 208-residue chain is ATP-dependent Clp protease proteolytic subunit (208 aa).

Ser105 acts as the Nucleophile in catalysis. His130 is an active-site residue.

Belongs to the peptidase S14 family. As to quaternary structure, fourteen ClpP subunits assemble into 2 heptameric rings which stack back to back to give a disk-like structure with a central cavity, resembling the structure of eukaryotic proteasomes.

The protein resides in the cytoplasm. The enzyme catalyses Hydrolysis of proteins to small peptides in the presence of ATP and magnesium. alpha-casein is the usual test substrate. In the absence of ATP, only oligopeptides shorter than five residues are hydrolyzed (such as succinyl-Leu-Tyr-|-NHMec, and Leu-Tyr-Leu-|-Tyr-Trp, in which cleavage of the -Tyr-|-Leu- and -Tyr-|-Trp bonds also occurs).. In terms of biological role, cleaves peptides in various proteins in a process that requires ATP hydrolysis. Has a chymotrypsin-like activity. Plays a major role in the degradation of misfolded proteins. The sequence is that of ATP-dependent Clp protease proteolytic subunit from Xylella fastidiosa (strain M12).